The sequence spans 123 residues: Cliotide T12 (123 aa).

The N-terminal stretch at 1-28 is a signal peptide; sequence MASLRIAPLALFFFLAASVMFTVEKTEA. Positions 29 to 58 form a cross-link, cyclopeptide (Gly-Asp); sequence GIPCGESCVFIPCITGAIGCSCKSKVCYRD. Disulfide bonds link C32/C48, C36/C50, and C41/C55. Positions 59 to 123 are cleaved as a propeptide — removed in mature form; the sequence is HVIAAEAKTM…KDHLKMSVPN (65 aa).

Contains 3 disulfide bonds. Post-translationally, this is a cyclic peptide.

In terms of biological role, probably participates in a plant defense mechanism. The chain is Cliotide T12 from Clitoria ternatea (Butterfly pea).